A 344-amino-acid polypeptide reads, in one-letter code: Mitochondrial mRNA pseudouridine synthase Rpusd3 (344 aa).

A mitochondrion-targeting transit peptide spans 1–36; that stretch reads MGALRVLRYVSMIWRPELGSCARQRDAGFGTEARRP. A disordered region spans residues 25–53; it reads RDAGFGTEARRPSQPHRSSKHKDLVEDQP.

Belongs to the pseudouridine synthase RluA family. Forms a regulatory protein-RNA complex, consisting of RCC1L, NGRN, RPUSD3, RPUSD4, TRUB2, FASTKD2 and 16S mt-rRNA.

It is found in the mitochondrion matrix. It carries out the reaction a uridine in mRNA = a pseudouridine in mRNA. In terms of biological role, catalyzes uridine to pseudouridine isomerization (pseudouridylation) of specific mitochondrial mRNAs (mt-mRNAs), a post-transcriptional modification necessary for their translation. Acts at position 390 in COXI mt-mRNA and at position 697-699 in mitochondrial COXIII mt-mRNA. As a component of a functional protein-RNA module, consisting of RCC1L, NGRN, RPUSD3, RPUSD4, TRUB2, FASTKD2 and 16S mitochondrial ribosomal RNA (16S mt-rRNA), controls 16S mt-rRNA abundance and may play a role in mitochondrial ribosome biogenesis. This chain is Mitochondrial mRNA pseudouridine synthase Rpusd3 (Rpusd3), found in Mus musculus (Mouse).